The primary structure comprises 1042 residues: Disintegrin and metalloproteinase domain-containing protein unc-71 (1042 aa).

An N-terminal signal peptide occupies residues 1–23; the sequence is MICASKITMLGLLVMCTLGGVLG. Residues 24 to 746 lie on the Extracellular side of the membrane; sequence KVDIRQTTAN…NIGTTLETAT (723 aa). N-linked (GlcNAc...) asparagine glycans are attached at residues asparagine 103 and asparagine 155. Positions 227–431 constitute a Peptidase M12B domain; sequence KYVEVALIAD…GNIQCLLNKP (205 aa). 4 disulfide bridges follow: cysteine 338–cysteine 426, cysteine 378–cysteine 410, cysteine 380–cysteine 386, and cysteine 496–cysteine 516. Residues 437 to 524 enclose the Disintegrin domain; that stretch reads LRECGNGVVD…DCPPDGHLID (88 aa). N-linked (GlcNAc...) asparagine glycosylation occurs at asparagine 538. One can recognise an EGF-like domain in the interval 662–699; that stretch reads SATACPTNNLALLCSGHGHCTTTARCVCFNGWSGVACD. 3 disulfide bridges follow: cysteine 666/cysteine 681, cysteine 675/cysteine 687, and cysteine 689/cysteine 698. An N-linked (GlcNAc...) asparagine glycan is attached at asparagine 703. Residues 747-767 traverse the membrane as a helical segment; that stretch reads LFAILLGFGVFLLLCLVCLML. Residues 768-1042 lie on the Cytoplasmic side of the membrane; the sequence is CYRRRSVVEI…KLEMTNSMHN (275 aa). Disordered stretches follow at residues 779 to 809, 825 to 850, and 980 to 1028; these read KPSD…RKRK, DERD…RRNG, and HDVG…PSLF. Over residues 825 to 836 the composition is skewed to basic and acidic residues; that stretch reads DERDSTSLRSRD. Over residues 1002–1027 the composition is skewed to polar residues; it reads DSPTLVNGASSSSTSNNYNFRQSPSL.

Its subcellular location is the cell membrane. Functionally, involved in the migration of sex myoblasts (progenitors of egg-laying muscles), Q neuroblasts and BDU interneurons during development. Involved in axon branching and guidance of neurons including GABAergic type D motor neurons. Promotes sex myoblast migration and positioning independently of gonad attraction cues. May act downstream of mig-13 in order to promote the guidance, migration and positioning of Q neuroblasts and their descendants along the anteroposterior body axis. Required for coordinated movements. The chain is Disintegrin and metalloproteinase domain-containing protein unc-71 from Caenorhabditis elegans.